The sequence spans 197 residues: 3-isopropylmalate dehydratase small subunit (197 aa).

It belongs to the LeuD family. LeuD type 1 subfamily. In terms of assembly, heterodimer of LeuC and LeuD.

The catalysed reaction is (2R,3S)-3-isopropylmalate = (2S)-2-isopropylmalate. It participates in amino-acid biosynthesis; L-leucine biosynthesis; L-leucine from 3-methyl-2-oxobutanoate: step 2/4. Catalyzes the isomerization between 2-isopropylmalate and 3-isopropylmalate, via the formation of 2-isopropylmaleate. The polypeptide is 3-isopropylmalate dehydratase small subunit (Acidothermus cellulolyticus (strain ATCC 43068 / DSM 8971 / 11B)).